The primary structure comprises 711 residues: Arginine decarboxylase 2 (711 aa).

Lys-147 bears the N6-(pyridoxal phosphate)lysine mark. 331-341 (IDIGGGLGIDY) contributes to the substrate binding site. A disordered region spans residues 642 to 661 (MHTKGGSEGENEEEEEDDEF). Residues 650–661 (GENEEEEEDDEF) are compositionally biased toward acidic residues.

Belongs to the Orn/Lys/Arg decarboxylase class-II family. SpeA subfamily. As to quaternary structure, homodimer and heterodimer with ADC1. Requires pyridoxal 5'-phosphate as cofactor. The cofactor is Mg(2+).

It is found in the plastid. It localises to the chloroplast. Its subcellular location is the cytoplasm. The protein localises to the cytosol. It carries out the reaction L-arginine + H(+) = agmatine + CO2. It functions in the pathway amine and polyamine biosynthesis; agmatine biosynthesis; agmatine from L-arginine: step 1/1. Its function is as follows. Required for the biosynthesis of putrescine. Catalyzes the first step of polyamine (PA) biosynthesis to produce putrescine from arginine. Is a major contributor to basal arginine decarboxylase (ADC) activity and putrescine biosynthesis. Accumulation of putrescine plays a positive role in salt stress tolerance. Accumulation of putrescine plays a positive role in freezing tolerance. Production of PA is essential for normal seed development. Controls PA homeostasis which is crucial for normal plant growth and development. The polypeptide is Arginine decarboxylase 2 (Arabidopsis thaliana (Mouse-ear cress)).